We begin with the raw amino-acid sequence, 702 residues long: Penicillin-binding protein activator LpoA (702 aa).

The N-terminal stretch at 1–26 (MVPSTFLRSKPARCLPVLLATLIFAG) is a signal peptide. Cysteine 27 carries N-palmitoyl cysteine lipidation. Cysteine 27 carries the S-diacylglycerol cysteine lipid modification. The interval 327-378 (GSRADPVQAPTQDQAAPAAEPAAQAPATSTTPQTTASPATQPVTAPAAQPQP) is disordered. A compositionally biased stretch (low complexity) spans 330 to 378 (ADPVQAPTQDQAAPAAEPAAQAPATSTTPQTTASPATQPVTAPAAQPQP).

The protein belongs to the LpoA family. In terms of assembly, interacts with PBP1a.

The protein resides in the cell outer membrane. In terms of biological role, regulator of peptidoglycan synthesis that is essential for the function of penicillin-binding protein 1A (PBP1a). The chain is Penicillin-binding protein activator LpoA from Klebsiella pneumoniae subsp. pneumoniae (strain ATCC 700721 / MGH 78578).